A 382-amino-acid polypeptide reads, in one-letter code: LIM homeobox transcription factor 1-alpha (382 aa).

LIM zinc-binding domains lie at 33–92 (SVCE…LFAV) and 92–154 (VKCG…EREL). 2 disordered regions span residues 161–208 (AASD…QQRR) and 252–285 (KLAR…GMEG). A DNA-binding region (homeobox) is located at residues 195–254 (PKRPRTILTTQQRRAFKASFEVSSKPCRKVRETLAAETGLSVRVVQVWFQNQRAKMKKLA). Residues 256–269 (RQQQQQQDQQNTQR) show a composition bias toward low complexity.

Isoform 1 is expressed in many tissues. Not found in heart, liver, spleen and testis. Relatively highly expressed in fetal brain. Isoform LMX1A-4AB is expressed in testis.

The protein localises to the nucleus. In terms of biological role, acts as a transcriptional activator by binding to an A/T-rich sequence, the FLAT element, in the insulin gene promoter. Required for development of the roof plate and, in turn, for specification of dorsal cell fates in the CNS and developing vertebrae. This Homo sapiens (Human) protein is LIM homeobox transcription factor 1-alpha (LMX1A).